A 437-amino-acid chain; its full sequence is Beta-1,3-galactosyl-O-glycosyl-glycoprotein beta-1,6-N-acetylglucosaminyltransferase 3 (437 aa).

Topologically, residues 1–6 (MVSWRR) are cytoplasmic. Residues 7-27 (FCWHYHGWTLGCYMLLAIIAL) form a helical; Signal-anchor for type II membrane protein membrane-spanning segment. Over 28–437 (KLSLRLKCDF…RHKAIYGTEL (410 aa)) the chain is Lumenal. Intrachain disulfides connect cysteine 70–cysteine 227, cysteine 161–cysteine 381, cysteine 182–cysteine 209, and cysteine 390–cysteine 422. Asparagine 288 carries an N-linked (GlcNAc...) asparagine glycan.

This sequence belongs to the glycosyltransferase 14 family. In terms of processing, N-glycosylated.

The protein resides in the golgi apparatus membrane. It carries out the reaction a 3-O-[beta-D-galactosyl-(1-&gt;3)-N-acetyl-alpha-D-galactosaminyl]-L-seryl-[protein] + UDP-N-acetyl-alpha-D-glucosamine = 3-O-{beta-D-galactosyl-(1-&gt;3)-[N-acetyl-beta-D-glucosaminyl-(1-&gt;6)]-N-acetyl-alpha-D-galactosaminyl}-L-seryl-[protein] + UDP + H(+). The enzyme catalyses a 3-O-[beta-D-galactosyl-(1-&gt;3)-N-acetyl-alpha-D-galactosaminyl]-L-threonyl-[protein] + UDP-N-acetyl-alpha-D-glucosamine = a 3-O-{beta-D-galactosyl-(1-&gt;3)-[N-acetyl-beta-D-glucosaminyl-(1-&gt;6)]-N-acetyl-alpha-D-galactosaminyl}-L-threonyl-[protein] + UDP + H(+). It catalyses the reaction a beta-D-Gal-(1-&gt;4)-beta-D-GlcNAc-(1-&gt;3)-beta-D-Gal-(1-&gt;4)-beta-D-GlcNAc derivative + UDP-N-acetyl-alpha-D-glucosamine = a beta-D-Gal-(1-&gt;4)-beta-D-GlcNAc-(1-&gt;3)-[beta-D-GlcNAc-(1-&gt;6)]-beta-D-Gal-(1-&gt;4)-N-acetyl-beta-D-glucosaminyl derivative + UDP + H(+). The catalysed reaction is 3-O-[N-acetyl-beta-D-glucosaminyl-(1-&gt;3)-N-acetyl-alpha-D-galactosaminyl]-L-seryl-[protein] + UDP-N-acetyl-alpha-D-glucosamine = 3-O-[N-acetyl-beta-D-glucosaminyl-(1-&gt;3)-[N-acetyl-beta-D-glucosaminyl-(1-&gt;6)]-N-acetyl-alpha-D-galactosaminyl]-L-seryl-[protein] + UDP + H(+). It carries out the reaction a 3-O-[N-acetyl-beta-D-glucosaminyl-(1-&gt;3)-N-acetyl-alpha-D-galactosaminyl]-L-threonyl-[protein] + UDP-N-acetyl-alpha-D-glucosamine = 3-O-[N-acetyl-beta-D-glucosaminyl-(1-&gt;3)-[N-acetyl-beta-D-glucosaminyl-(1-&gt;6)]-N-acetyl-alpha-D-galactosaminyl]-L-threonyl-[protein] + UDP + H(+). It participates in protein modification; protein glycosylation. In terms of biological role, glycosyltransferase that can synthesize all known mucin beta 6 N-acetylglucosaminides. Mediates core 2 and core 4 O-glycan branching, 2 important steps in mucin-type biosynthesis. Also has I-branching enzyme activity by converting linear into branched poly-N-acetyllactosaminoglycans, leading to introduce the blood group I antigen during embryonic development. The polypeptide is Beta-1,3-galactosyl-O-glycosyl-glycoprotein beta-1,6-N-acetylglucosaminyltransferase 3 (Gcnt3) (Rattus norvegicus (Rat)).